We begin with the raw amino-acid sequence, 117 residues long: Large ribosomal subunit protein bL19 (117 aa).

Belongs to the bacterial ribosomal protein bL19 family.

In terms of biological role, this protein is located at the 30S-50S ribosomal subunit interface and may play a role in the structure and function of the aminoacyl-tRNA binding site. This Shewanella halifaxensis (strain HAW-EB4) protein is Large ribosomal subunit protein bL19.